A 290-amino-acid polypeptide reads, in one-letter code: Chloride intracellular channel exc-4 (290 aa).

Residues 37–57 traverse the membrane as a helical segment; that stretch reads LFCQEFWMELYALYEIGVARV.

It belongs to the chloride channel CLIC family. Monomer. Expressed in the secretory system, hypodermis, vulva, pharyngeal muscle, rectal gland, tubular rectal epithelium cells, and tubular neuronal support cells in the head and tail.

It localises to the cytoplasm. The protein resides in the membrane. Functionally, may insert into membranes and form chloride ion channels. Involved in the formation of the excretory canal. Required to prevent cystic lumenal expansions in the excretory cell. Not required for formation of the initial tube, but is required for regulating the size of the tube lumen as it grows. In Caenorhabditis elegans, this protein is Chloride intracellular channel exc-4 (exc-4).